The chain runs to 273 residues: Peroxiredoxin-4 (273 aa).

The first 40 residues, 1–40 (METWSKLLDGTTPSRRWRKLVLLLPPLLLFLLQTEALQGL), serve as a signal peptide directing secretion. Positions 81 to 239 (AKISKPAPYW…TLRLVQAFQY (159 aa)) constitute a Thioredoxin domain. The Cysteine sulfenic acid (-SOH) intermediate role is filled by Cys126.

This sequence belongs to the peroxiredoxin family. AhpC/Prx1 subfamily. Homodimer; disulfide-linked, upon oxidation. 5 homodimers assemble to form a ring-like decamer. In terms of processing, the enzyme can be inactivated by further oxidation of the cysteine sulfenic acid (C(P)-SOH) to sulphinic acid (C(P)-SO2H) and sulphonic acid (C(P)-SO3H) instead of its condensation to a disulfide bond.

It is found in the cytoplasm. The protein localises to the endoplasmic reticulum. Its subcellular location is the secreted. It catalyses the reaction a hydroperoxide + [thioredoxin]-dithiol = an alcohol + [thioredoxin]-disulfide + H2O. Functionally, thiol-specific peroxidase that catalyzes the reduction of hydrogen peroxide and organic hydroperoxides to water and alcohols, respectively. Plays a role in cell protection against oxidative stress by detoxifying peroxides and as sensor of hydrogen peroxide-mediated signaling events. Regulates the activation of NF-kappa-B in the cytosol by a modulation of I-kappa-B-alpha phosphorylation. This Rattus norvegicus (Rat) protein is Peroxiredoxin-4 (Prdx4).